We begin with the raw amino-acid sequence, 239 residues long: 1-(5-phosphoribosyl)-5-[(5-phosphoribosylamino)methylideneamino] imidazole-4-carboxamide isomerase (239 aa).

Asp-8 (proton acceptor) is an active-site residue. Asp-129 (proton donor) is an active-site residue.

This sequence belongs to the HisA/HisF family.

It is found in the cytoplasm. It catalyses the reaction 1-(5-phospho-beta-D-ribosyl)-5-[(5-phospho-beta-D-ribosylamino)methylideneamino]imidazole-4-carboxamide = 5-[(5-phospho-1-deoxy-D-ribulos-1-ylimino)methylamino]-1-(5-phospho-beta-D-ribosyl)imidazole-4-carboxamide. It functions in the pathway amino-acid biosynthesis; L-histidine biosynthesis; L-histidine from 5-phospho-alpha-D-ribose 1-diphosphate: step 4/9. The chain is 1-(5-phosphoribosyl)-5-[(5-phosphoribosylamino)methylideneamino] imidazole-4-carboxamide isomerase from Paramagnetospirillum magneticum (strain ATCC 700264 / AMB-1) (Magnetospirillum magneticum).